Consider the following 85-residue polypeptide: Large ribosomal subunit protein bL27 (85 aa).

Belongs to the bacterial ribosomal protein bL27 family.

This chain is Large ribosomal subunit protein bL27, found in Campylobacter curvus (strain 525.92).